The chain runs to 165 residues: SsrA-binding protein (165 aa).

The segment covering 1–10 has biased composition (basic residues); that stretch reads MSKKGKKKSK. The disordered stretch occupies residues 1 to 21; sequence MSKKGKKKSKNNSSVDGNRRL.

It belongs to the SmpB family.

It localises to the cytoplasm. Required for rescue of stalled ribosomes mediated by trans-translation. Binds to transfer-messenger RNA (tmRNA), required for stable association of tmRNA with ribosomes. tmRNA and SmpB together mimic tRNA shape, replacing the anticodon stem-loop with SmpB. tmRNA is encoded by the ssrA gene; the 2 termini fold to resemble tRNA(Ala) and it encodes a 'tag peptide', a short internal open reading frame. During trans-translation Ala-aminoacylated tmRNA acts like a tRNA, entering the A-site of stalled ribosomes, displacing the stalled mRNA. The ribosome then switches to translate the ORF on the tmRNA; the nascent peptide is terminated with the 'tag peptide' encoded by the tmRNA and targeted for degradation. The ribosome is freed to recommence translation, which seems to be the essential function of trans-translation. In Prochlorococcus marinus (strain NATL1A), this protein is SsrA-binding protein.